The following is a 187-amino-acid chain: Elongation factor P (187 aa).

It belongs to the elongation factor P family.

It localises to the cytoplasm. Its pathway is protein biosynthesis; polypeptide chain elongation. In terms of biological role, involved in peptide bond synthesis. Stimulates efficient translation and peptide-bond synthesis on native or reconstituted 70S ribosomes in vitro. Probably functions indirectly by altering the affinity of the ribosome for aminoacyl-tRNA, thus increasing their reactivity as acceptors for peptidyl transferase. The chain is Elongation factor P (efp) from Mycobacterium bovis (strain ATCC BAA-935 / AF2122/97).